The sequence spans 333 residues: Taste receptor type 2 member 38 (333 aa).

The Extracellular portion of the chain corresponds to 1–17 (MLTLTHICTVSYEVRST). The chain crosses the membrane as a helical span at residues 18–38 (FLFISVLEFAVGFLTNAFISL). Over 39–55 (VNFWDVVKRQPLSNSDC) the chain is Cytoplasmic. Residues 56-76 (VLLCLSISRLFLHGLLFLSAI) form a helical membrane-spanning segment. Residues 77–94 (QLTHFQKLSEPLNHSYQV) lie on the Extracellular side of the membrane. Residues 95 to 115 (ILMLWMIANQANLWLAACLSL) form a helical membrane-spanning segment. The Cytoplasmic segment spans residues 116–142 (LYCSKLIRFSHTFLICLASWVSRKISQ). Residues 143–163 (MLLGIILCSCICTVLCVWCFF) form a helical membrane-spanning segment. The Extracellular segment spans residues 164 to 190 (GRLHFTVTTVLFMNNNTRLNWQIKDLN). Asn-178 carries an N-linked (GlcNAc...) asparagine glycan. The helical transmembrane segment at 191–211 (LFYSFLFCYLWSVPPFLLFLV) threads the bilayer. The Cytoplasmic segment spans residues 212–251 (SSGMLTVSLGRHMRTMKVYTRDSRDPSLEAHIKALKSLVS). Residues 252–272 (FFCFFVISSCAAFISVPLLIL) form a helical membrane-spanning segment. At 273–276 (WHDK) the chain is on the extracellular side. The helical transmembrane segment at 277–297 (IGVMVCVGIMAACPSGHAAVL) threads the bilayer. Residues 298 to 333 (ISGNAKLRRAVTTILLWAQSSLKVRADHMADSRTLC) are Cytoplasmic-facing.

The protein belongs to the G-protein coupled receptor T2R family.

Its subcellular location is the membrane. Receptor that may play a role in the perception of bitterness and is gustducin-linked. May play a role in sensing the chemical composition of the gastrointestinal content. The activity of this receptor may stimulate alpha gustducin, mediate PLC-beta-2 activation and lead to the gating of TRPM5. This chain is Taste receptor type 2 member 38 (TAS2R38), found in Papio hamadryas (Hamadryas baboon).